Reading from the N-terminus, the 209-residue chain is Ribosomal RNA large subunit methyltransferase E (209 aa).

Residues G63, W65, D83, D99, and D124 each contribute to the S-adenosyl-L-methionine site. The active-site Proton acceptor is the K164.

The protein belongs to the class I-like SAM-binding methyltransferase superfamily. RNA methyltransferase RlmE family.

The protein localises to the cytoplasm. It carries out the reaction uridine(2552) in 23S rRNA + S-adenosyl-L-methionine = 2'-O-methyluridine(2552) in 23S rRNA + S-adenosyl-L-homocysteine + H(+). Functionally, specifically methylates the uridine in position 2552 of 23S rRNA at the 2'-O position of the ribose in the fully assembled 50S ribosomal subunit. This chain is Ribosomal RNA large subunit methyltransferase E, found in Proteus mirabilis (strain HI4320).